Consider the following 512-residue polypeptide: MHTPDFAGPDDARAVDIMDICESILERKRHDSERSTCSILEQTDMEAVEALVCMSSWGQRSQKGDLLRIRPLTPVSDSGDVTTTVHMDAATPELPKDFHSLSTLCITPPQSPDLVEPSTRTPVSPQVTDSKACTATDVLQSSAVVARALSGGAERGLLGLEPVPSSPCRAKGTSVIRHTGESPAACFPTIQTPDCRLSDSREGEEQLLGHFETLQDTHLTDSLLSTNLVSCQPCLHKSGGLLLTDKGQQAGWPGAVQTCSPKNYENDLPRKTTPLISVSVPAPPVLCQMIPVTGQSSMLPAFLKPPPQLSVGTVRPILAQAAPAPQPVFVGPAVPQGAVMLVLPQGALPPPAPCAANVMAAGNTKLLPLAPAPVFITSSQNCVPQVDFSRRRNYVCSFPGCRKTYFKSSHLKAHLRTHTGEKPFNCSWDGCDKKFARSDELSRHRRTHTGEKKFVCPVCDRRFMRSDHLTKHARRHMTTKKIPGWQAEVGKLNRIASAESPGSPLVSMPASA.

Positions 109–128 (PQSPDLVEPSTRTPVSPQVT) are disordered. Over residues 118-128 (STRTPVSPQVT) the composition is skewed to polar residues. A Phosphoserine modification is found at S124. 3 consecutive C2H2-type zinc fingers follow at residues 394-418 (YVCS…LRTH), 424-448 (FNCS…RRTH), and 454-476 (FVCP…ARRH).

Belongs to the Sp1 C2H2-type zinc-finger protein family. As to quaternary structure, interacts with SIN3A. Ubiquitous. Higher expression in erythroid cells.

It localises to the nucleus. Functionally, transcription factor. Activates the epsilon- and gamma-globin gene promoters and, to a much lower degree, the beta-globin gene and represses promoters containing SP1-like binding inhibiting cell growth. Represses transcription of SMAD7 which enhances TGF-beta signaling. Induces apoptosis. The chain is Krueppel-like factor 11 (KLF11) from Homo sapiens (Human).